A 236-amino-acid chain; its full sequence is Leucyl/phenylalanyl-tRNA--protein transferase (236 aa).

This sequence belongs to the L/F-transferase family.

Its subcellular location is the cytoplasm. The catalysed reaction is N-terminal L-lysyl-[protein] + L-leucyl-tRNA(Leu) = N-terminal L-leucyl-L-lysyl-[protein] + tRNA(Leu) + H(+). It catalyses the reaction N-terminal L-arginyl-[protein] + L-leucyl-tRNA(Leu) = N-terminal L-leucyl-L-arginyl-[protein] + tRNA(Leu) + H(+). It carries out the reaction L-phenylalanyl-tRNA(Phe) + an N-terminal L-alpha-aminoacyl-[protein] = an N-terminal L-phenylalanyl-L-alpha-aminoacyl-[protein] + tRNA(Phe). Its function is as follows. Functions in the N-end rule pathway of protein degradation where it conjugates Leu, Phe and, less efficiently, Met from aminoacyl-tRNAs to the N-termini of proteins containing an N-terminal arginine or lysine. The sequence is that of Leucyl/phenylalanyl-tRNA--protein transferase from Idiomarina loihiensis (strain ATCC BAA-735 / DSM 15497 / L2-TR).